Here is a 1069-residue protein sequence, read N- to C-terminus: Protogenin B (1069 aa).

A signal peptide spans 1–26; the sequence is MGSVRWKTHQQWLIIFWILSFSGVFG. Topologically, residues 27-936 are extracellular; that stretch reads FSELWFSIEP…LYHIDEKSMS (910 aa). Ig-like domains follow at residues 30-117, 122-208, 221-308, and 312-396; these read LWFS…ARLT, LVFS…AELV, PLII…GNVT, and PSLV…SRLI. 2 disulfide bridges follow: C51/C100 and C143/C191. Residues N81, N88, N180, and N229 are each glycosylated (N-linked (GlcNAc...) asparagine). C242 and C290 are disulfide-bonded. 2 N-linked (GlcNAc...) asparagine glycosylation sites follow: N299 and N306. Residues 317 to 336 are disordered; that stretch reads KPESQTRPRAGTARFSCQAE. C333 and C380 are joined by a disulfide. Fibronectin type-III domains are found at residues 406-500, 502-601, 608-701, 711-804, and 809-904; these read APRN…TLED, PLRT…TPKT, PAPN…CPST, PPDH…TLLE, and PPES…VKGK. N458, N473, and N560 each carry an N-linked (GlcNAc...) asparagine glycan. Over residues 590–605 the composition is skewed to polar residues; it reads PSAWSSHRTPKTSSAT. The interval 590–609 is disordered; the sequence is PSAWSSHRTPKTSSATVPPA. N618, N720, and N834 each carry an N-linked (GlcNAc...) asparagine glycan. The chain crosses the membrane as a helical span at residues 937–957; sequence GIIVGVCIALSCIILCIFILL. At 958–1069 the chain is on the cytoplasmic side; it reads SKTQTQKSAS…KTVLCYEDEA (112 aa).

Belongs to the immunoglobulin superfamily. DCC family. Initially expressed in the ventral forebrain and ventral spinal cord. Later, also expressed in the midbrain and in parts of the diencephalon and hindbrain.

The protein localises to the membrane. May play a role in anteroposterior axis elongation. The polypeptide is Protogenin B (Danio rerio (Zebrafish)).